The primary structure comprises 77 residues: Defensin-like protein 159 (77 aa).

The first 27 residues, 1 to 27 (MAKLSCSYFLVLILVFSAFLMVERAEG), serve as a signal peptide directing secretion. Intrachain disulfides connect cysteine 30/cysteine 77, cysteine 40/cysteine 59, cysteine 45/cysteine 71, and cysteine 49/cysteine 73.

Belongs to the DEFL family.

It is found in the secreted. The sequence is that of Defensin-like protein 159 (LCR25) from Arabidopsis thaliana (Mouse-ear cress).